Reading from the N-terminus, the 501-residue chain is Probable malate:quinone oxidoreductase (501 aa).

This sequence belongs to the MQO family. FAD serves as cofactor.

The catalysed reaction is (S)-malate + a quinone = a quinol + oxaloacetate. It functions in the pathway carbohydrate metabolism; tricarboxylic acid cycle; oxaloacetate from (S)-malate (quinone route): step 1/1. This chain is Probable malate:quinone oxidoreductase, found in Mycolicibacterium paratuberculosis (strain ATCC BAA-968 / K-10) (Mycobacterium paratuberculosis).